The following is a 171-amino-acid chain: uncharacterized protein (171 aa).

This is an uncharacterized protein from Orgyia pseudotsugata multicapsid polyhedrosis virus (OpMNPV).